The following is a 109-amino-acid chain: Large ribosomal subunit protein uL24 (109 aa).

This sequence belongs to the universal ribosomal protein uL24 family. Part of the 50S ribosomal subunit.

In terms of biological role, one of two assembly initiator proteins, it binds directly to the 5'-end of the 23S rRNA, where it nucleates assembly of the 50S subunit. One of the proteins that surrounds the polypeptide exit tunnel on the outside of the subunit. This chain is Large ribosomal subunit protein uL24, found in Rickettsia bellii (strain RML369-C).